Reading from the N-terminus, the 331-residue chain is Protoheme IX farnesyltransferase (331 aa).

8 helical membrane passes run 63–83, 109–129, 132–152, 160–180, 188–208, 215–235, 241–261, and 294–314; these read LACT…LNCL, SVFI…VSGV, LAAG…TAFL, IVFG…AAAG, WLFS…AILL, VGIP…AISV, VFLS…YGIL, and ILYM…VSIV.

It belongs to the UbiA prenyltransferase family. Protoheme IX farnesyltransferase subfamily.

It localises to the cell inner membrane. The catalysed reaction is heme b + (2E,6E)-farnesyl diphosphate + H2O = Fe(II)-heme o + diphosphate. It functions in the pathway porphyrin-containing compound metabolism; heme O biosynthesis; heme O from protoheme: step 1/1. Its function is as follows. Converts heme B (protoheme IX) to heme O by substitution of the vinyl group on carbon 2 of heme B porphyrin ring with a hydroxyethyl farnesyl side group. The sequence is that of Protoheme IX farnesyltransferase from Prochlorococcus marinus (strain NATL2A).